The sequence spans 204 residues: Leucyl/phenylalanyl-tRNA--protein transferase (204 aa).

Belongs to the L/F-transferase family.

The protein localises to the cytoplasm. It carries out the reaction N-terminal L-lysyl-[protein] + L-leucyl-tRNA(Leu) = N-terminal L-leucyl-L-lysyl-[protein] + tRNA(Leu) + H(+). It catalyses the reaction N-terminal L-arginyl-[protein] + L-leucyl-tRNA(Leu) = N-terminal L-leucyl-L-arginyl-[protein] + tRNA(Leu) + H(+). The catalysed reaction is L-phenylalanyl-tRNA(Phe) + an N-terminal L-alpha-aminoacyl-[protein] = an N-terminal L-phenylalanyl-L-alpha-aminoacyl-[protein] + tRNA(Phe). Functions in the N-end rule pathway of protein degradation where it conjugates Leu, Phe and, less efficiently, Met from aminoacyl-tRNAs to the N-termini of proteins containing an N-terminal arginine or lysine. This Rhizobium etli (strain CIAT 652) protein is Leucyl/phenylalanyl-tRNA--protein transferase.